The sequence spans 128 residues: Glycine cleavage system H protein (128 aa).

The Lipoyl-binding domain occupies 25–107 (TITVGITHHA…YGAGWFFKIK (83 aa)). At Lys-66 the chain carries N6-lipoyllysine.

It belongs to the GcvH family. The glycine cleavage system is composed of four proteins: P, T, L and H. The cofactor is (R)-lipoate.

Its function is as follows. The glycine cleavage system catalyzes the degradation of glycine. The H protein shuttles the methylamine group of glycine from the P protein to the T protein. The protein is Glycine cleavage system H protein of Neisseria meningitidis serogroup C (strain 053442).